Consider the following 252-residue polypeptide: NDR1/HIN1-like protein 6 (252 aa).

The interval 1–46 (MSQHQKIYPVQDPEAATARPTAPLVPRGSSRSEHGDPSKVPLNQRP) is disordered. A helical membrane pass occupies residues 70-90 (FCFLLLLVVAVGASIGILYLV). N121, N154, N166, and N180 each carry an N-linked (GlcNAc...) asparagine glycan.

As to quaternary structure, homodimer. Highly expressed in seeds and at lower level in roots and senescing leaves. Expressed in leaves and flowers.

It is found in the cell membrane. Its subcellular location is the cytoplasm. The protein localises to the cytosol. Functionally, plays an important role in the abiotic stresses-induced abscisic acid (ABA) signaling and biosynthesis. Acts as a positive regulator of ABA-mediated seed germination inhibition. Functions downstream of ABF2/AREB1, ABF4/AREB2 and ABF3. In Arabidopsis thaliana (Mouse-ear cress), this protein is NDR1/HIN1-like protein 6.